A 328-amino-acid polypeptide reads, in one-letter code: tRNA methyltransferase 10 homolog A (328 aa).

2 disordered regions span residues Met-1–Val-91 and His-281–Gln-328. Ser-22 is subject to Phosphoserine. Positions Arg-43–Ser-83 form a coiled coil. The segment covering Lys-52–Lys-62 has biased composition (basic and acidic residues). Basic residues predominate over residues Glu-63 to Glu-75. In terms of domain architecture, SAM-dependent MTase TRM10-type spans Arg-88–Val-278. Residues Glu-305–Gln-319 show a composition bias toward basic and acidic residues.

It belongs to the class IV-like SAM-binding methyltransferase superfamily. TRM10 family. In terms of assembly, interacts with tRNA.

It localises to the nucleus. Its subcellular location is the nucleolus. The catalysed reaction is guanosine(9) in tRNA + S-adenosyl-L-methionine = N(1)-methylguanosine(9) in tRNA + S-adenosyl-L-homocysteine + H(+). In terms of biological role, S-adenosyl-L-methionine-dependent guanine N(1)-methyltransferase that catalyzes the formation of N(1)-methylguanine at position 9 (m1G9) in tRNAs. Probably not able to catalyze formation of N(1)-methyladenine at position 9 (m1A9) in tRNAs. This chain is tRNA methyltransferase 10 homolog A (Trmt10a), found in Mus musculus (Mouse).